The following is a 359-amino-acid chain: Cytoplasmic tRNA 2-thiolation protein 1 (359 aa).

Belongs to the TtcA family. CTU1/NCS6/ATPBD3 subfamily. Interacts with NCS2 and URM1. May act by forming a heterodimer with NCS2. Component of a large molecular weight complex of more than 250 kDa.

The protein resides in the cytoplasm. The protein localises to the mitochondrion. It functions in the pathway tRNA modification; 5-methoxycarbonylmethyl-2-thiouridine-tRNA biosynthesis. In terms of biological role, plays a central role in 2-thiolation of mcm(5)S(2)U at tRNA wobble positions of tRNA(Lys), tRNA(Glu) and tRNA(Gln). Directly binds tRNAs and probably acts by catalyzing adenylation of tRNAs, an intermediate required for 2-thiolation. It is unclear whether it acts as a sulfurtransferase that transfers sulfur from thiocarboxylated URM1 onto the uridine of tRNAs at wobble position. Prior mcm(5) tRNA modification by the elongator complex is required for 2-thiolation. May also be involved in protein urmylation. May also be involved in protein urmylation and in invasive and pseudohyphal growth. The chain is Cytoplasmic tRNA 2-thiolation protein 1 from Saccharomyces cerevisiae (strain ATCC 204508 / S288c) (Baker's yeast).